Reading from the N-terminus, the 1647-residue chain is MAP kinase-activating death domain protein (1647 aa).

The region spanning 14-268 is the uDENN domain; the sequence is YLVIVGARHP…VPVSGQKRVD (255 aa). Over residues 108–122 the composition is skewed to basic and acidic residues; the sequence is EKGEGGAGSRGKEGT. Positions 108–168 are disordered; it reads EKGEGGAGSR…GKRRAKAGSR (61 aa). Residues 128-141 are compositionally biased toward low complexity; the sequence is SEEGGTESSESGSS. Residues 142 to 157 are compositionally biased toward polar residues; it reads LQPLSADSTPDVNQSP. Serine 156 is subject to Phosphoserine. Over residues 158-167 the composition is skewed to basic residues; it reads RGKRRAKAGS. One can recognise a cDENN domain in the interval 289 to 429; sequence RFTLVDFPLH…ESLELKKHLK (141 aa). The region spanning 431-565 is the dDENN domain; it reads ALASMSLNTQ…LNPTNYAFQR (135 aa). Disordered stretches follow at residues 604–636 and 678–842; these read ALSV…SSYS and NQKE…STEG. Over residues 615-630 the composition is skewed to acidic residues; sequence SEPTDDSGSDSMDYDD. 2 positions are modified to phosphoserine: serine 689 and serine 692. The segment covering 689-699 has biased composition (polar residues); it reads SENSQENPPLR. The segment covering 700–712 has biased composition (low complexity); that stretch reads SSSSTTASSSPST. Basic and acidic residues predominate over residues 750–768; that stretch reads NVDRRQAEIGEGSVRRRIY. Residues 790–804 are compositionally biased toward polar residues; that stretch reads ESYTPRFSQHVSGNR. Phosphoserine occurs at positions 813, 818, and 820. Over residues 827–840 the composition is skewed to low complexity; that stretch reads RASSPNSTVSNTST. Residues serine 858, serine 862, serine 916, serine 921, and serine 930 each carry the phosphoserine modification. Disordered regions lie at residues 913 to 941, 1051 to 1110, and 1146 to 1243; these read QKSS…SSEN, KEPD…DTRS, and VFDL…DSEI. A compositionally biased stretch (polar residues) spans 932 to 941; sequence QGRSSNSSEN. Residue serine 1059 is modified to Phosphoserine. A phosphothreonine mark is found at threonine 1061 and threonine 1066. At serine 1110 the chain carries Phosphoserine. Composition is skewed to polar residues over residues 1158–1173, 1189–1207, and 1234–1243; these read QISA…SSQR, RSSS…SSGE, and SRGTLSDSEI. Threonine 1237 bears the Phosphothreonine mark. Serine 1239 and serine 1270 each carry phosphoserine. The Death domain occupies 1340 to 1415; sequence GMDQGPQEMI…GLVYSQQINE (76 aa).

The protein belongs to the MADD family. As to quaternary structure, interacts (via death domain) with TNFRSF1A (via death domain). Interacts with PIDD1. Interacts with YWHAZ. Interacts (via death domain) with KIF1B; links the motor KIF1B to Rab3-carrying vesicles in anterograde synaptic vesicle transport. Interacts with KIF1A. Interacts (via uDENN domain) with RAB3A, RAB3B, RAB3C and RAB3D; the GTP-bound form of the Rab proteins is preferred for interaction. In terms of tissue distribution, expressed in testis, ovary, brain and heart. Expressed in spleen, thymus, prostate, testis, ovary, small instestine and colon. Expressed in liver. Not detected in the brain, breast, kidney, lung, ovary, pancreas, testis, uterus, stomach and thyroid. As to expression, expressed in the brain, breast, kidney, lung, ovary, pancreas, testis, uterus, stomach and thyroid.

Its subcellular location is the cell membrane. The protein resides in the cytoplasm. The protein localises to the cell projection. It is found in the axon. Guanyl-nucleotide exchange factor that regulates small GTPases of the Rab family. Converts GDP-bound inactive form of RAB27A and RAB27B to the GTP-bound active forms. Converts GDP-bound inactive form of RAB3A, RAB3C and RAB3D to the GTP-bound active forms, GTPases involved in synaptic vesicle exocytosis and vesicle secretion. Plays a role in synaptic vesicle formation and in vesicle trafficking at the neuromuscular junction. Involved in up-regulating a post-docking step of synaptic exocytosis in central synapses. Probably by binding to the motor proteins KIF1B and KIF1A, mediates motor-dependent transport of GTP-RAB3A-positive vesicles to the presynaptic nerve terminals. Plays a role in TNFA-mediated activation of the MAPK pathway, including ERK1/2. May link TNFRSF1A with MAP kinase activation. May be involved in the regulation of TNFA-induced apoptosis. The chain is MAP kinase-activating death domain protein from Homo sapiens (Human).